The chain runs to 124 residues: Large ribosomal subunit protein uL22 (124 aa).

It belongs to the universal ribosomal protein uL22 family. Part of the 50S ribosomal subunit.

Functionally, this protein binds specifically to 23S rRNA; its binding is stimulated by other ribosomal proteins, e.g. L4, L17, and L20. It is important during the early stages of 50S assembly. It makes multiple contacts with different domains of the 23S rRNA in the assembled 50S subunit and ribosome. In terms of biological role, the globular domain of the protein is located near the polypeptide exit tunnel on the outside of the subunit, while an extended beta-hairpin is found that lines the wall of the exit tunnel in the center of the 70S ribosome. The chain is Large ribosomal subunit protein uL22 from Buchnera aphidicola subsp. Cinara cedri (strain Cc).